Reading from the N-terminus, the 364-residue chain is DNA polymerase IV (364 aa).

One can recognise a UmuC domain in the interval 14 to 198 (IIHIDMDAFF…LPIEKFHGVG (185 aa)). The Mg(2+) site is built by Asp18 and Asp116. Residue Glu117 is part of the active site.

The protein belongs to the DNA polymerase type-Y family. In terms of assembly, monomer. It depends on Mg(2+) as a cofactor.

It is found in the cytoplasm. The catalysed reaction is DNA(n) + a 2'-deoxyribonucleoside 5'-triphosphate = DNA(n+1) + diphosphate. In terms of biological role, poorly processive, error-prone DNA polymerase involved in untargeted mutagenesis. Copies undamaged DNA at stalled replication forks, which arise in vivo from mismatched or misaligned primer ends. These misaligned primers can be extended by PolIV. Exhibits no 3'-5' exonuclease (proofreading) activity. May be involved in translesional synthesis, in conjunction with the beta clamp from PolIII. The polypeptide is DNA polymerase IV (Streptococcus pyogenes serotype M28 (strain MGAS6180)).